Reading from the N-terminus, the 145-residue chain is Peptide methionine sulfoxide reductase MsrB (145 aa).

Positions 6 to 129 (KNERLKQLTD…NSAALRFIPV (124 aa)) constitute a MsrB domain. The Nucleophile role is filled by Cys-118.

The protein belongs to the MsrB Met sulfoxide reductase family.

It catalyses the reaction L-methionyl-[protein] + [thioredoxin]-disulfide + H2O = L-methionyl-(R)-S-oxide-[protein] + [thioredoxin]-dithiol. In Listeria innocua serovar 6a (strain ATCC BAA-680 / CLIP 11262), this protein is Peptide methionine sulfoxide reductase MsrB.